The sequence spans 352 residues: MVFRIASSPYTHNQRQTSRIMLLVLLAAVPGIAAQLWFFGWGTLVQILLASVSALLAEALVLKLRKQSVAATLKDNSALLTGLLLAVSIPPLAPWWMVVLGTVFAVIIAKQLYGGLGQNPFNPAMIGYVVLLISFPVQMTSWLPPHEIAVNIPGFIDAIQVIFSGHITSGGDMNTLRLGIDGISQATPLDTFKTSVRAGHSVEQIMQYPIYSGMLAGVGWQWVNLAWLAGGVWLLWQKAIRWHIPLSFLVTLALCATLGWLFSPETLAAPQIHLLSGATMLGAFFILTDPVTASTTNRGRLIFGALAGLLVWLIRSFGGYPDGVAFAVLLANITVPLIDYYTRPRVYGHRKG.

The next 5 membrane-spanning stretches (helical) occupy residues 20–40 (IMLL…WFFG), 42–62 (GTLV…ALVL), 78–109 (ALLT…VIIA), 123–143 (PAMI…TSWL), and 148–168 (IAVN…GHIT). Residue Thr-187 is modified to FMN phosphoryl threonine. 5 consecutive transmembrane segments (helical) span residues 215 to 235 (LAGV…VWLL), 242 to 262 (WHIP…GWLF), 267 to 287 (LAAP…FFIL), 301 to 321 (LIFG…GGYP), and 322 to 342 (DGVA…DYYT).

It belongs to the NqrB/RnfD family. In terms of assembly, the complex is composed of six subunits: RsxA, RsxB, RsxC, RsxD, RsxE and RsxG. Requires FMN as cofactor.

The protein resides in the cell inner membrane. In terms of biological role, part of a membrane-bound complex that couples electron transfer with translocation of ions across the membrane. Required to maintain the reduced state of SoxR. The sequence is that of Ion-translocating oxidoreductase complex subunit D from Escherichia coli (strain SMS-3-5 / SECEC).